Here is a 236-residue protein sequence, read N- to C-terminus: Small ribosomal subunit protein uS2c (236 aa).

It belongs to the universal ribosomal protein uS2 family.

It is found in the plastid. The protein resides in the chloroplast. This chain is Small ribosomal subunit protein uS2c (rps2), found in Crucihimalaya wallichii (Rock-cress).